Reading from the N-terminus, the 329-residue chain is Arylacetonitrilase (329 aa).

The 274-residue stretch at 6-279 (VRVAVTQAEP…EGIVYANLDM (274 aa)) folds into the CN hydrolase domain. Residue glutamate 46 is the Proton acceptor of the active site. Lysine 126 is a catalytic residue. Cysteine 161 functions as the Nucleophile in the catalytic mechanism.

It belongs to the carbon-nitrogen hydrolase superfamily. Nitrilase family.

It carries out the reaction a nitrile + 2 H2O = a carboxylate + NH4(+). The catalysed reaction is 4-chlorophenylacetonitrile + 2 H2O = 4-chlorophenylacetate + NH4(+). Functionally, nitrilase that hydrolyzes preferentially phenylacetonitrile and heteroaromatic nitriles, but has significantly lower activity for (R,S)-mandelonitrile. Also acts on dinitriles like phenylenediacetonitriles (PDAs) 1,2-PDA, 1,3-PDA, and 1,4-PDA, and cyanophenyl acetonitriles (CPAs) 2-CPA and 4-CPA. In Hypocrea virens (strain Gv29-8 / FGSC 10586) (Gliocladium virens), this protein is Arylacetonitrilase.